An 898-amino-acid chain; its full sequence is Alanine--tRNA ligase (898 aa).

The Zn(2+) site is built by histidine 582, histidine 586, cysteine 685, and histidine 689.

Belongs to the class-II aminoacyl-tRNA synthetase family. Zn(2+) serves as cofactor.

It is found in the cytoplasm. The catalysed reaction is tRNA(Ala) + L-alanine + ATP = L-alanyl-tRNA(Ala) + AMP + diphosphate. Catalyzes the attachment of alanine to tRNA(Ala) in a two-step reaction: alanine is first activated by ATP to form Ala-AMP and then transferred to the acceptor end of tRNA(Ala). Also edits incorrectly charged Ser-tRNA(Ala) and Gly-tRNA(Ala) via its editing domain. This chain is Alanine--tRNA ligase, found in Mycolicibacterium vanbaalenii (strain DSM 7251 / JCM 13017 / BCRC 16820 / KCTC 9966 / NRRL B-24157 / PYR-1) (Mycobacterium vanbaalenii).